Here is a 252-residue protein sequence, read N- to C-terminus: Type II secretion system protein N (252 aa).

Topologically, residues 1-4 (MKQK) are cytoplasmic. The chain crosses the membrane as a helical span at residues 5–25 (VLIAALFLVAYLGFLLVKLPA). Residues 26–252 (TLVVRHLPLP…RFPLRYQGRI (227 aa)) lie on the Periplasmic side of the membrane.

Belongs to the GSP N family.

The protein localises to the cell inner membrane. Involved in a type II secretion system (T2SS, formerly general secretion pathway, GSP) for the export of proteins. In Aeromonas hydrophila, this protein is Type II secretion system protein N (exeN).